The following is a 180-amino-acid chain: Adenine phosphoribosyltransferase (180 aa).

It belongs to the purine/pyrimidine phosphoribosyltransferase family. Homodimer.

The protein localises to the cytoplasm. It catalyses the reaction AMP + diphosphate = 5-phospho-alpha-D-ribose 1-diphosphate + adenine. Its pathway is purine metabolism; AMP biosynthesis via salvage pathway; AMP from adenine: step 1/1. Its function is as follows. Catalyzes a salvage reaction resulting in the formation of AMP, that is energically less costly than de novo synthesis. The polypeptide is Adenine phosphoribosyltransferase (Marinomonas sp. (strain MWYL1)).